The sequence spans 34 residues: Photosystem II reaction center protein M (34 aa).

A helical transmembrane segment spans residues 5–25 (ILALIAIALFISVPTAFLIII).

It belongs to the PsbM family. In terms of assembly, PSII is composed of 1 copy each of membrane proteins PsbA, PsbB, PsbC, PsbD, PsbE, PsbF, PsbH, PsbI, PsbJ, PsbK, PsbL, PsbM, PsbT, PsbX, PsbY, PsbZ, Psb30/Ycf12, at least 3 peripheral proteins of the oxygen-evolving complex and a large number of cofactors. It forms dimeric complexes.

The protein resides in the plastid. It is found in the chloroplast thylakoid membrane. One of the components of the core complex of photosystem II (PSII). PSII is a light-driven water:plastoquinone oxidoreductase that uses light energy to abstract electrons from H(2)O, generating O(2) and a proton gradient subsequently used for ATP formation. It consists of a core antenna complex that captures photons, and an electron transfer chain that converts photonic excitation into a charge separation. This subunit is found at the monomer-monomer interface. The sequence is that of Photosystem II reaction center protein M from Gnetum parvifolium (Small-leaved jointfir).